The primary structure comprises 1006 residues: D-2-hydroxyglutarate dehydrogenase (1006 aa).

In terms of domain architecture, FAD-binding PCMH-type spans 47-279 (YQRLPQAAVF…VEAKLNVLPI (233 aa)). Positions 397 and 495 each coordinate (R)-2-hydroxyglutarate. The 4Fe-4S ferredoxin-type domain maps to 655–687 (SHEVYDAMAGCLACKSCAGQCPIKVNVPDFRSR). 4 residues coordinate [4Fe-4S] cluster: Cys665, Cys668, Cys671, and Cys675.

This sequence in the N-terminal section; belongs to the FAD-binding oxidoreductase/transferase type 4 family. [4Fe-4S] cluster is required as a cofactor. Requires FAD as cofactor.

The catalysed reaction is (R)-2-hydroxyglutarate + A = 2-oxoglutarate + AH2. Its pathway is amino-acid degradation. Functionally, catalyzes the oxidation of D-2-hydroxyglutarate (D-2-HGA) to 2-oxoglutarate. Is involved in a D-lysine catabolic pathway. In Pseudomonas putida (strain ATCC 47054 / DSM 6125 / CFBP 8728 / NCIMB 11950 / KT2440), this protein is D-2-hydroxyglutarate dehydrogenase.